The chain runs to 152 residues: Putative NrdI-like protein (152 aa).

Belongs to the NrdI family.

The sequence is that of Putative NrdI-like protein from Streptococcus pyogenes serotype M18 (strain MGAS8232).